The chain runs to 413 residues: Putative F-box protein At3g23970 (413 aa).

The F-box domain occupies 1–42 (MNIPPELTFEVLVRLPLKSLARFRSVRKEWKLVIDSEFFRDC).

The sequence is that of Putative F-box protein At3g23970 from Arabidopsis thaliana (Mouse-ear cress).